A 315-amino-acid polypeptide reads, in one-letter code: MPEGKYSYHEPVLLEEAIASLNCRGGGIYVDGTVGGGGHAALILERSAPDGFLLGMDVDGDALQAAEKRLMPFGRRKTLVKANYADMRKVLADLKILQVDGILLDLGVSSHQLDAAERGFSLLKDAPLDMRMDSEAGRSAYDVVNTCSERELKDIIRKYGEEIMAGRIARAIAEKRKDTPIKSTTQLAAIVAGALPGGFRHKKIHPATRTFQALRIYINNELSNLHRAIFDSTDCLKPGGRFSIISFHSLEDSLVKNGFRSLEKGCICPADMPVCACGQSPRLKVITRKPISPCRDEVEANPRSRSARLRTAERI.

S-adenosyl-L-methionine-binding positions include 37 to 39, Asp57, Leu91, Asp105, and Gln112; that span reads GGH.

This sequence belongs to the methyltransferase superfamily. RsmH family.

The protein resides in the cytoplasm. It carries out the reaction cytidine(1402) in 16S rRNA + S-adenosyl-L-methionine = N(4)-methylcytidine(1402) in 16S rRNA + S-adenosyl-L-homocysteine + H(+). In terms of biological role, specifically methylates the N4 position of cytidine in position 1402 (C1402) of 16S rRNA. In Syntrophus aciditrophicus (strain SB), this protein is Ribosomal RNA small subunit methyltransferase H.